Here is a 135-residue protein sequence, read N- to C-terminus: Sex-regulated protein janus-A (135 aa).

Lys-37 is a substrate binding site. His-63 functions as the Proton acceptor in the catalytic mechanism. 104–106 (SQG) lines the substrate pocket.

Belongs to the janus family.

JanA and janB regulate somatic sex differentiation. This is Sex-regulated protein janus-A (janA) from Drosophila simulans (Fruit fly).